The primary structure comprises 96 residues: Co-chaperonin GroES (96 aa).

The protein belongs to the GroES chaperonin family. As to quaternary structure, heptamer of 7 subunits arranged in a ring. Interacts with the chaperonin GroEL.

It is found in the cytoplasm. Its function is as follows. Together with the chaperonin GroEL, plays an essential role in assisting protein folding. The GroEL-GroES system forms a nano-cage that allows encapsulation of the non-native substrate proteins and provides a physical environment optimized to promote and accelerate protein folding. GroES binds to the apical surface of the GroEL ring, thereby capping the opening of the GroEL channel. The polypeptide is Co-chaperonin GroES (Actinobacillus pleuropneumoniae serotype 3 (strain JL03)).